Reading from the N-terminus, the 306-residue chain is MGNLDDNKFTWVIKNVPTLNSDMLFSNYFVIGGCSWRVVAHSKENNFKESLSLTLIVAEDSAQKMGCGWSRYAKIIFTLVNQISEILSQRIETMFDQKSSVFSSETMFSIGKFDEHFAGFIVNGEIKIVVEFLEIIDKLVLSKESNPPFKKTKLNNDGEVSKDLIREVPVIMESIVVNGFHVLPSQVEFVKRIFEKHPDVAKEFRPTNRIVKTAYMNVLLSLIETLRQSPREISKNDLDGACGLLRSMKEAGFKLDWLEKKLNEVLEKKEKEESYETRMREIEEEMKDLKAKALDVGAPLRLDDVV.

Positions 6–132 constitute an MATH domain; sequence DNKFTWVIKN…NGEIKIVVEF (127 aa). Residues 253–298 are a coiled coil; it reads FKLDWLEKKLNEVLEKKEKEESYETRMREIEEEMKDLKAKALDVGA.

This Arabidopsis thaliana (Mouse-ear cress) protein is MATH domain and coiled-coil domain-containing protein At3g29580.